A 1640-amino-acid polypeptide reads, in one-letter code: Basal body protein 10 (1640 aa).

Positions 11-64 (VLRRKLEALGYSDPLEPASLQLVQKLVEDLVHTTDSYTAVKQQCAKQAQEIAAF) are homodimerization. The stretch at 93-148 (AERHEREAREHYTAVKRLEDTIAELSYWKHAAAEKLASADKENAGLRKRCEELAKL) forms a coiled coil. The segment at 154–185 (SGAATPQSVAPKISSRSPIRVAPPPSPPRPRQ) is disordered. Residues 174–183 (VAPPPSPPRP) are compositionally biased toward pro residues. 10 coiled-coil regions span residues 191–232 (LQAA…RDVE), 260–332 (ILQL…LQDT), 370–411 (VERL…AQSR), 461–722 (FAAL…AEAD), 758–960 (ARQM…AQAA), 1010–1030 (GEAL…LVRE), 1059–1086 (RASA…LAAE), 1129–1282 (INQY…LQAS), 1323–1494 (AKDQ…AERD), and 1523–1557 (AELA…TRAT). A compositionally biased stretch (low complexity) spans 1592–1618 (GQGQVQGPAGTAPAAAAGAPGPQPGQA). A disordered region spans residues 1592–1640 (GQGQVQGPAGTAPAAAAGAPGPQPGQAQAGGFGGAHGGGSISLSGGPRR). The span at 1619–1631 (QAGGFGGAHGGGS) shows a compositional bias: gly residues.

This sequence belongs to the CEP135/TSGA10 family. As to quaternary structure, homodimer.

It localises to the cytoplasm. The protein localises to the cytoskeleton. The protein resides in the microtubule organizing center. It is found in the centrosome. Its subcellular location is the centriole. Its function is as follows. Microtubule-binding protein essential for cytoskeletal organization (e.g. rootlet microtubule bundles) and flagellar basal body/centriole assembly. This chain is Basal body protein 10, found in Chlamydomonas reinhardtii (Chlamydomonas smithii).